Consider the following 437-residue polypeptide: Purple acid phosphatase 21 (437 aa).

The first 25 residues, 1–25 (MKKMKIFGFLISFSLFFLSPFVCQA), serve as a signal peptide directing secretion. A glycan (N-linked (GlcNAc...) asparagine) is linked at N30. Fe cation is bound by residues D152, D179, and Y182. D179 is a Zn(2+) binding site. Zn(2+) contacts are provided by N212 and H296. A substrate-binding site is contributed by N212. Catalysis depends on H306, which acts as the Proton donor. H333 is a Zn(2+) binding site. 333–335 (HVH) contributes to the substrate binding site. Position 335 (H335) interacts with Fe cation.

It belongs to the metallophosphoesterase superfamily. Purple acid phosphatase family. As to quaternary structure, homodimer. It depends on Fe cation as a cofactor. The cofactor is Zn(2+). As to expression, expressed flowers and siliques.

Its subcellular location is the secreted. It carries out the reaction a phosphate monoester + H2O = an alcohol + phosphate. The sequence is that of Purple acid phosphatase 21 (PAP21) from Arabidopsis thaliana (Mouse-ear cress).